We begin with the raw amino-acid sequence, 570 residues long: Formate--tetrahydrofolate ligase (570 aa).

65-72 (TPHGEGKT) is a binding site for ATP.

Belongs to the formate--tetrahydrofolate ligase family.

The catalysed reaction is (6S)-5,6,7,8-tetrahydrofolate + formate + ATP = (6R)-10-formyltetrahydrofolate + ADP + phosphate. It participates in one-carbon metabolism; tetrahydrofolate interconversion. This Shewanella oneidensis (strain ATCC 700550 / JCM 31522 / CIP 106686 / LMG 19005 / NCIMB 14063 / MR-1) protein is Formate--tetrahydrofolate ligase.